The chain runs to 546 residues: CTP synthase (546 aa).

Residues 1 to 266 (MTTNYIFVTG…DELVCKRFGI (266 aa)) form an amidoligase domain region. Ser14 is a binding site for CTP. Ser14 contacts UTP. ATP-binding positions include 15–20 (SLGKGI) and Asp72. Mg(2+) contacts are provided by Asp72 and Glu140. CTP is bound by residues 147–149 (DIE), 187–192 (KTKPTQ), and Lys223. UTP-binding positions include 187 to 192 (KTKPTQ) and Lys223. 239 to 241 (RDV) contributes to the ATP binding site. Residues 291-542 (TIGMVGKYIE…VKAAGEFQRG (252 aa)) enclose the Glutamine amidotransferase type-1 domain. L-glutamine is bound at residue Gly352. The active-site Nucleophile; for glutamine hydrolysis is the Cys379. L-glutamine contacts are provided by residues 380–383 (LGMQ), Glu403, and Arg470. Residues His515 and Glu517 contribute to the active site.

Belongs to the CTP synthase family. Homotetramer.

The enzyme catalyses UTP + L-glutamine + ATP + H2O = CTP + L-glutamate + ADP + phosphate + 2 H(+). It carries out the reaction L-glutamine + H2O = L-glutamate + NH4(+). It catalyses the reaction UTP + NH4(+) + ATP = CTP + ADP + phosphate + 2 H(+). It functions in the pathway pyrimidine metabolism; CTP biosynthesis via de novo pathway; CTP from UDP: step 2/2. With respect to regulation, allosterically activated by GTP, when glutamine is the substrate; GTP has no effect on the reaction when ammonia is the substrate. The allosteric effector GTP functions by stabilizing the protein conformation that binds the tetrahedral intermediate(s) formed during glutamine hydrolysis. Inhibited by the product CTP, via allosteric rather than competitive inhibition. Catalyzes the ATP-dependent amination of UTP to CTP with either L-glutamine or ammonia as the source of nitrogen. Regulates intracellular CTP levels through interactions with the four ribonucleotide triphosphates. The polypeptide is CTP synthase (Vibrio atlanticus (strain LGP32) (Vibrio splendidus (strain Mel32))).